The primary structure comprises 927 residues: UPF0182 protein bll7333 (927 aa).

7 helical membrane passes run 17 to 37, 65 to 85, 134 to 154, 185 to 205, 220 to 240, 264 to 284, and 297 to 317; these read AVVG…LLAL, AVVF…NGWL, LALL…QFVY, WMML…LVHG, VIAH…WSFG, VGLP…LAAW, and AAFL…PVLF.

Belongs to the UPF0182 family.

It is found in the cell membrane. The sequence is that of UPF0182 protein bll7333 from Bradyrhizobium diazoefficiens (strain JCM 10833 / BCRC 13528 / IAM 13628 / NBRC 14792 / USDA 110).